The following is a 134-amino-acid chain: Translation initiation factor 2 subunit beta (134 aa).

The segment covering 1 to 12 (MEYDDMLDRAME) has biased composition (basic and acidic residues). The disordered stretch occupies residues 1 to 28 (MEYDDMLDRAMEETPEIDGTSERFEVPD).

It belongs to the eIF-2-beta/eIF-5 family. As to quaternary structure, heterotrimer composed of an alpha, a beta and a gamma chain.

EIF-2 functions in the early steps of protein synthesis by forming a ternary complex with GTP and initiator tRNA. The polypeptide is Translation initiation factor 2 subunit beta (Haloarcula marismortui (strain ATCC 43049 / DSM 3752 / JCM 8966 / VKM B-1809) (Halobacterium marismortui)).